The sequence spans 789 residues: Protein FLOWERING LOCUS D (789 aa).

A disordered region spans residues 1–23 (MVSFSAPKKRRRGRSQRSMSSLN). Residues 76–177 (NKEATTEALL…FGIAQAIKDK (102 aa)) enclose the SWIRM domain. FAD contacts are provided by residues Ser195, Glu214, Arg216, Arg222, and 240–243 (GGSV). Lys287 participates in a covalent cross-link: Glycyl lysine isopeptide (Lys-Gly) (interchain with G-Cter in SUMO). Residues Glu595, 604–605 (TM), and 607–612 (GAFVTG) each bind FAD. Residues Lys693 and Lys770 each participate in a glycyl lysine isopeptide (Lys-Gly) (interchain with G-Cter in SUMO) cross-link.

The protein belongs to the flavin monoamine oxidase family. Interacts with HDA6. It depends on FAD as a cofactor. In terms of processing, sumoylated at Lys-287, Lys-693 and Lys-770 by SIZ1. Sumoylation alters its activity and the histone H4 acetylation status of FLC locus, promoting FLC expression.

Its function is as follows. Probable histone demethylase that promotes flowering independently of the photoperiod and vernalization pathways by repressing FLOWERING LOCUS C (FLC), a floral repressor that blocks the transition from vegetative to reproductive development. Probably mediates histone H3 'Lys-4' demethylation at FLC locus. Seems to act in partial redundancy with LDL1 and LDL2 to repress FLC expression. Required for histone H4 deacetylation of FLC locus. May be a component of the histone deacetylase complex. Forms a histone deacetylase complex with HDA5, HDA6 and MSI4/FVE that represses FLC gene expression to control flowering time. Required for systemic acquired resistance (SAR) toward pathogenic bacteria (e.g. Pseudomonas syringae pv tomato DC3000 (avrPto)). Together with FLD and MSI4/FVE, contributes to dehydroabietinal-dependent (DA, a diterpenoid tricyclic diterpene) activation of flowering ans SAR. The sequence is that of Protein FLOWERING LOCUS D from Arabidopsis thaliana (Mouse-ear cress).